A 385-amino-acid polypeptide reads, in one-letter code: 1-deoxy-D-xylulose 5-phosphate reductoisomerase (385 aa).

NADPH is bound by residues Thr-10, Gly-11, Ser-12, Ile-13, Lys-37, and Asn-124. Residue Lys-125 coordinates 1-deoxy-D-xylulose 5-phosphate. Glu-126 lines the NADPH pocket. Asp-150 lines the Mn(2+) pocket. Ser-151, Glu-152, Ser-176, and His-199 together coordinate 1-deoxy-D-xylulose 5-phosphate. Residue Glu-152 coordinates Mn(2+). Gly-205 is a binding site for NADPH. Positions 212, 217, 218, and 221 each coordinate 1-deoxy-D-xylulose 5-phosphate. Mn(2+) is bound at residue Glu-221.

The protein belongs to the DXR family. Mg(2+) is required as a cofactor. Requires Mn(2+) as cofactor.

It carries out the reaction 2-C-methyl-D-erythritol 4-phosphate + NADP(+) = 1-deoxy-D-xylulose 5-phosphate + NADPH + H(+). It participates in isoprenoid biosynthesis; isopentenyl diphosphate biosynthesis via DXP pathway; isopentenyl diphosphate from 1-deoxy-D-xylulose 5-phosphate: step 1/6. Catalyzes the NADPH-dependent rearrangement and reduction of 1-deoxy-D-xylulose-5-phosphate (DXP) to 2-C-methyl-D-erythritol 4-phosphate (MEP). The chain is 1-deoxy-D-xylulose 5-phosphate reductoisomerase from Clostridium botulinum (strain ATCC 19397 / Type A).